The chain runs to 953 residues: ATP-dependent 6-phosphofructokinase (953 aa).

The interval 1 to 558 (MIEGISFASF…QLQGFLLTNS (558 aa)) is N-terminal catalytic PFK domain 1. ATP is bound by residues G193, 256-257 (RC), and 286-289 (GDGS). Position 287 (D287) interacts with Mg(2+). Substrate contacts are provided by residues 332-334 (SID), R369, 376-378 (MGR), E433, R460, and 466-469 (HVQR). Residue D334 is the Proton acceptor of the active site. The interval 559–572 (ADKDRPQEPAKDPL) is interdomain linker. Positions 573–953 (RVAIVCTGAP…AKEQGIIDPC (381 aa)) are C-terminal regulatory PFK domain 2. Beta-D-fructose 2,6-bisphosphate is bound by residues R645, 702 to 706 (TISNN), R740, 747 to 749 (QGG), E807, R833, 839 to 842 (HVQQ), and R906.

This sequence belongs to the phosphofructokinase type A (PFKA) family. ATP-dependent PFK group I subfamily. Eukaryotic two domain clade 'E' sub-subfamily. In terms of assembly, heterooctamer of 4 alpha and 4 beta chains. Requires Mg(2+) as cofactor.

The protein localises to the cytoplasm. It carries out the reaction beta-D-fructose 6-phosphate + ATP = beta-D-fructose 1,6-bisphosphate + ADP + H(+). The protein operates within carbohydrate degradation; glycolysis; D-glyceraldehyde 3-phosphate and glycerone phosphate from D-glucose: step 3/4. Allosterically activated by ADP, AMP, or fructose 2,6-bisphosphate, and allosterically inhibited by ATP or citrate. In terms of biological role, catalyzes the phosphorylation of D-fructose 6-phosphate to fructose 1,6-bisphosphate by ATP, the first committing step of glycolysis. This Yarrowia lipolytica (strain CLIB 122 / E 150) (Yeast) protein is ATP-dependent 6-phosphofructokinase (PFK1).